Reading from the N-terminus, the 477-residue chain is Aspartyl/glutamyl-tRNA(Asn/Gln) amidotransferase subunit B (477 aa).

Belongs to the GatB/GatE family. GatB subfamily. As to quaternary structure, heterotrimer of A, B and C subunits.

It carries out the reaction L-glutamyl-tRNA(Gln) + L-glutamine + ATP + H2O = L-glutaminyl-tRNA(Gln) + L-glutamate + ADP + phosphate + H(+). The catalysed reaction is L-aspartyl-tRNA(Asn) + L-glutamine + ATP + H2O = L-asparaginyl-tRNA(Asn) + L-glutamate + ADP + phosphate + 2 H(+). Functionally, allows the formation of correctly charged Asn-tRNA(Asn) or Gln-tRNA(Gln) through the transamidation of misacylated Asp-tRNA(Asn) or Glu-tRNA(Gln) in organisms which lack either or both of asparaginyl-tRNA or glutaminyl-tRNA synthetases. The reaction takes place in the presence of glutamine and ATP through an activated phospho-Asp-tRNA(Asn) or phospho-Glu-tRNA(Gln). This chain is Aspartyl/glutamyl-tRNA(Asn/Gln) amidotransferase subunit B, found in Coxiella burnetii (strain CbuG_Q212) (Coxiella burnetii (strain Q212)).